We begin with the raw amino-acid sequence, 308 residues long: B3 domain-containing protein REM23 (308 aa).

The TF-B3 1 DNA-binding region spans 19-114 (FFKVLKRSDM…SFTVKIFNKD (96 aa)). The interval 117-198 (EMMQPPQSRA…TERTQNSKRT (82 aa)) is disordered. The segment covering 121–133 (PPQSRASFASSSR) has biased composition (polar residues). Basic and acidic residues predominate over residues 134–145 (VKTEQDVKREEE). The segment covering 149-166 (SSDSRSRGPTTAAETNRG) has biased composition (polar residues). A compositionally biased stretch (basic residues) spans 168–177 (SYKRKLNFGK). Residues 178 to 198 (KKAEETQTYKRTERTQNSKRT) show a composition bias toward basic and acidic residues. The TF-B3 2 DNA-binding region spans 216–308 (VAGFKIFISK…LELLLVVSKP (93 aa)).

The protein resides in the nucleus. The sequence is that of B3 domain-containing protein REM23 (REM23) from Arabidopsis thaliana (Mouse-ear cress).